Reading from the N-terminus, the 170-residue chain is Acetyl-CoA decarbonylase/synthase complex subunit epsilon 1 (170 aa).

Belongs to the CdhB family. In terms of assembly, heterotetramer of two alpha and two epsilon subunits. The ACDS complex is made up of alpha, epsilon, beta, gamma and delta subunits with a probable stoichiometry of (alpha(2)epsilon(2))(4)-beta(8)-(gamma(1)delta(1))(8).

The protein operates within one-carbon metabolism; methanogenesis from acetate. Its function is as follows. Part of a complex that catalyzes the reversible cleavage of acetyl-CoA, allowing growth on acetate as sole source of carbon and energy. The alpha-epsilon subcomponent functions as a carbon monoxide dehydrogenase. The precise role of the epsilon subunit is unclear; it may have a stabilizing role within the alpha(2)epsilon(2) component and/or be involved in electron transfer to FAD during a potential FAD-mediated CO oxidation. The sequence is that of Acetyl-CoA decarbonylase/synthase complex subunit epsilon 1 (cdhB1) from Methanosarcina mazei (strain ATCC BAA-159 / DSM 3647 / Goe1 / Go1 / JCM 11833 / OCM 88) (Methanosarcina frisia).